Reading from the N-terminus, the 393-residue chain is MSLPLTKKDLMIVNMGPQHPSMHGVLRLIVTLDGEDVIDCEPILGYLHRGMEKIAENRTIIQYLPYVTRWDYLATMFTEAITVNAPEFLENIQIPQRASYIRVIMLELSRIASHLLWLGPFMADLGAQTPFFYIFRERELIYDLFEAATGMRMMHNYFRIGGVAADLPYGWIDKCLDFCDYFLRGVVEYQQLITQNPIFLERVEGVGFISGEEAVNWGLSGPMLRASGIQWDLRKVDPYESYNQFDWKVQWQKEGDSLARYLVRVGEMSESIKIIQQAIEKIPGGPYENLEVRRFKKEKNSEWNDFEYKFLGKKPSPNFELSRQELYVRVEAPKGELGIYLVGDDSLFPWRWKIRPPGFINLQILPQLVKKMKLADIMTILGSIDIIMGEVDR.

The protein belongs to the complex I 49 kDa subunit family. As to quaternary structure, NDH is composed of at least 16 different subunits, 5 of which are encoded in the nucleus.

It localises to the plastid. The protein resides in the chloroplast thylakoid membrane. The catalysed reaction is a plastoquinone + NADH + (n+1) H(+)(in) = a plastoquinol + NAD(+) + n H(+)(out). The enzyme catalyses a plastoquinone + NADPH + (n+1) H(+)(in) = a plastoquinol + NADP(+) + n H(+)(out). Its function is as follows. NDH shuttles electrons from NAD(P)H:plastoquinone, via FMN and iron-sulfur (Fe-S) centers, to quinones in the photosynthetic chain and possibly in a chloroplast respiratory chain. The immediate electron acceptor for the enzyme in this species is believed to be plastoquinone. Couples the redox reaction to proton translocation, and thus conserves the redox energy in a proton gradient. This chain is NAD(P)H-quinone oxidoreductase subunit H, chloroplastic, found in Hordeum vulgare (Barley).